A 224-amino-acid chain; its full sequence is Large ribosomal subunit protein uL1 (224 aa).

It belongs to the universal ribosomal protein uL1 family. As to quaternary structure, part of the 50S ribosomal subunit.

Functionally, binds directly to 23S rRNA. The L1 stalk is quite mobile in the ribosome, and is involved in E site tRNA release. In terms of biological role, protein L1 is also a translational repressor protein, it controls the translation of the L11 operon by binding to its mRNA. In Borrelia recurrentis (strain A1), this protein is Large ribosomal subunit protein uL1.